The following is a 618-amino-acid chain: uncharacterized protein (618 aa).

Disordered regions lie at residues 70–118, 330–352, 456–552, and 587–618; these read SSEY…SLPR, LTAR…EVPC, TLPV…PILT, and IPSD…LKTL. Composition is skewed to basic and acidic residues over residues 74–84 and 333–343; these read KGTRRDSRGYE and RTEEEPERHVP. The segment covering 463–481 has biased composition (low complexity); it reads TSRPQSPSSLSSKTTGLPL. 2 stretches are compositionally biased toward polar residues: residues 485 to 516 and 609 to 618; these read KPTS…NSLM and SDPSHSLKTL.

This is an uncharacterized protein from Danio rerio (Zebrafish).